Consider the following 500-residue polypeptide: Neuronal acetylcholine receptor subunit beta-2 (500 aa).

The N-terminal stretch at 1 to 24 is a signal peptide; that stretch reads MAGHSNSMALFSFSLLWLCSGVLG. Topologically, residues 25–237 are extracellular; sequence TDTEERLVEH…IIRRKPLFYT (213 aa). N-linked (GlcNAc...) asparagine glycosylation is found at N50 and N167. C154 and C168 are joined by a disulfide. A helical transmembrane segment spans residues 238 to 258; that stretch reads INLIIPCVLITSLAILVFYLP. Topologically, residues 259-266 are cytoplasmic; the sequence is SDCGEKMT. A helical membrane pass occupies residues 267 to 287; sequence LCISVLLALTVFLLLISKIVP. The Extracellular portion of the chain corresponds to 288–299; it reads PTSLDVPLVGKY. The helical transmembrane segment at 300 to 320 threads the bilayer; the sequence is LMFTMVLVTFSIVTSVCVLNV. The Cytoplasmic portion of the chain corresponds to 321–458; it reads HHRSPTTHTM…WKYVAMVIDR (138 aa). The chain crosses the membrane as a helical span at residues 459 to 479; the sequence is LFLWIFVFVCVFGTVGMFLQP.

This sequence belongs to the ligand-gated ion channel (TC 1.A.9) family. Acetylcholine receptor (TC 1.A.9.1) subfamily. Beta-2/CHRNB2 sub-subfamily. In terms of assembly, neuronal AChR is a heteropentamer composed of two different types of subunits: alpha and beta. CHRNB2/Beta-2 subunit can be combined to CHRNA2/alpha-2, CHRNA3/alpha-3 or CHRNA4/alpha-4, CHRNA5/alpha-5, CHRNA6/alpha-6 and CHRNB3/beta-3 to give rise to functional receptors. CHRNA2:CHRNB2 and CHRNA4:CHRNB2 nAChR complexes exist in two subtypes: LS (low agonist sensitivity) with a (CHRNA2/4)3:(CHRNB2)2 and HS (high agonist sensitivity) with a (CHRNA2/4)2:(CHRNB2)3 stoichiometry; the subtypes differ in their subunit binding interfaces which are involved in ligand binding. Cells produce predominantly an (CHRNA4)3:(CHRNB2)2 nAChR. The stoichiometric form (CHRNA4)2:(CHRNB2)3 expression is selectively up-regulated by nicotine and has lower single channel conductance and calcium permeability. Also part of the stoichiometric forms: (CHRNA4:CHRNB2)2:CHRNB3 or (CHRNA6:CHRNB2)2:CHRNB3. Can form heteropentamers with CHRNA7, mainly found in basal forebrain cholinergic neurons. Interacts with RIC3; which is required for proper folding and assembly. Interacts with LYPD6. As to expression, expressed in most regions of the CNS.

The protein resides in the synaptic cell membrane. Its subcellular location is the cell membrane. The catalysed reaction is Ca(2+)(in) = Ca(2+)(out). It carries out the reaction K(+)(in) = K(+)(out). It catalyses the reaction Na(+)(in) = Na(+)(out). Its activity is regulated as follows. Activated by a myriad of ligands such as acetylcholine, cytisine, nicotine, choline and epibatidine. Channel potentiation by calcium is stoichiometry-selective, CHRNA4:CHRNB2 nACh receptor is achieved by calcium association with topographically distinct sites framed by anionic residues within the CHRNA4 subunit and between the CHRNA4 and CHRNB2 subunits. Oligomeric amyloid-beta protein 42 activates specifially CHRNA7:CHRNB2 nAchRs. nAChR activity is inhibited by the antagonist alpha-conotoxins BuIA, PnIA, PnIC, GID and MII, small disulfide-constrained peptides from cone snails. Functionally, component of neuronal acetylcholine receptors (nAChRs) that function as pentameric, ligand-gated cation channels with high calcium permeability among other activities. nAChRs are excitatory neurotrasnmitter receptors formed by a collection of nAChR subunits known to mediate synaptic transmission in the nervous system and the neuromuscular junction. Each nAchR subunit confers differential attributes to channel properties, including activation, deactivation and desensitization kinetics, pH sensitivity, cation permeability, and binding to allosteric modulators. CHRNB2 forms heteropentameric neuronal acetylcholine receptors with CHRNA2, CHRNA3, CHRNA4 and CHRNA6, as well as CHRNA5 and CHRNB3 as accesory subunits. Found in two major stoichiometric forms,(CHRNA4)3:(CHRNB2)2 and (CHRNA4)2:(CHRNB2)3, the two stoichiometric forms differ in their unitary conductance, calcium permeability, ACh sensitivity and potentiation by divalent cation. Heteropentameric channels with CHRNA6 and CHRNA4 exhibit high sensitivity to ACh and nicotine and are predominantly expressed in only a few brain areas, including dopaminergic neurons, norepirephrine neurons and cells of the visual system. nAChrs containing CHRNA6 subunits mediate endogenous cholinergic modulation of dopamine and gamma-aminobutyric acid (GABA) release in response to nicotine at nerve terminals. Also forms functional nAChRs with other subunits such as CHRNA7:CHRNB2, mainly expressed in basal forebrain cholinergic neurons. In Rattus norvegicus (Rat), this protein is Neuronal acetylcholine receptor subunit beta-2 (Chrnb2).